We begin with the raw amino-acid sequence, 258 residues long: 5'-nucleotidase SurE (258 aa).

4 residues coordinate a divalent metal cation: Asp-14, Asp-15, Ser-45, and Asn-101.

It belongs to the SurE nucleotidase family. It depends on a divalent metal cation as a cofactor.

The protein localises to the cytoplasm. The enzyme catalyses a ribonucleoside 5'-phosphate + H2O = a ribonucleoside + phosphate. Functionally, nucleotidase that shows phosphatase activity on nucleoside 5'-monophosphates. The sequence is that of 5'-nucleotidase SurE from Chlorobium phaeobacteroides (strain DSM 266 / SMG 266 / 2430).